The following is a 187-amino-acid chain: Ethylene-responsive transcription factor ERF015 (187 aa).

Residues 26 to 83 (CYRGVRKRSWGKWVSEIRVPKTGRRIWLGSYDAPEKAARAYDAALFCIRGEKGVYNFP) constitute a DNA-binding region (AP2/ERF).

The protein belongs to the AP2/ERF transcription factor family. ERF subfamily.

It localises to the nucleus. Probably acts as a transcriptional activator. Binds to the GCC-box pathogenesis-related promoter element. May be involved in the regulation of gene expression by stress factors and by components of stress signal transduction pathways. This chain is Ethylene-responsive transcription factor ERF015 (ERF015), found in Arabidopsis thaliana (Mouse-ear cress).